A 474-amino-acid chain; its full sequence is Sestrin homolog (474 aa).

This sequence belongs to the sestrin family.

The protein resides in the nucleus. Its subcellular location is the cytoplasm. May function as a negative feedback regulator of TOR function. This Caenorhabditis elegans protein is Sestrin homolog.